Here is an 828-residue protein sequence, read N- to C-terminus: Periplasmic nitrate reductase (828 aa).

A signal peptide (tat-type signal) is located at residues 1–31 (MKLSRRSFMKANAVAAAAAAAGLSVPGVARA). A 4Fe-4S Mo/W bis-MGD-type domain is found at 39 to 95 (IKWDKAPCRFCGTGCGVLVGTQQGRVVACQGDPDAPVNRGLNCIKGYFLPKIMYGKD). [4Fe-4S] cluster contacts are provided by cysteine 46, cysteine 49, cysteine 53, and cysteine 81. Mo-bis(molybdopterin guanine dinucleotide)-binding positions include lysine 83, glutamine 150, asparagine 175, cysteine 179, 212–219 (WGANMAEM), 243–247 (STYQH), 262–264 (QSD), methionine 372, glutamine 376, asparagine 482, 508–509 (SD), lysine 531, aspartate 558, and 718–727 (TGRVLEHWHT). A substrate-binding site is contributed by phenylalanine 794. 2 residues coordinate Mo-bis(molybdopterin guanine dinucleotide): asparagine 802 and lysine 819.

The protein belongs to the prokaryotic molybdopterin-containing oxidoreductase family. NasA/NapA/NarB subfamily. In terms of assembly, component of the periplasmic nitrate reductase NapAB complex composed of NapA and NapB. Requires [4Fe-4S] cluster as cofactor. Mo-bis(molybdopterin guanine dinucleotide) is required as a cofactor. In terms of processing, predicted to be exported by the Tat system. The position of the signal peptide cleavage has not been experimentally proven.

The protein localises to the periplasm. It catalyses the reaction 2 Fe(II)-[cytochrome] + nitrate + 2 H(+) = 2 Fe(III)-[cytochrome] + nitrite + H2O. Its function is as follows. Catalytic subunit of the periplasmic nitrate reductase complex NapAB. Receives electrons from NapB and catalyzes the reduction of nitrate to nitrite. This is Periplasmic nitrate reductase from Escherichia coli O157:H7 (strain EC4115 / EHEC).